The primary structure comprises 495 residues: MTAKHNQYVMALDLGTTGNRAILFDYEGNIVGQAYKELTQFYPKAGWVEHDALEIWRDTKTVMQEVVQKTAIQPQQIVAIGLTVQRETCLLWDKTTGQPLHPAIVWQDRRTAHFCGELTAAGYVDEIYERTGLVLDAYFSGTKLHWLLDWVKQSKSVDPANLLAGTIDSWALWNLTGGKVHRTDHSNASRTMVLNLDSLIWDEKLLDLFTIPAQIMPEVQPSLSYFGVTDPEILGVEIPITAIFGDQQAALYAHGCDRPGLLKCTYGTGAFLVANTGQTVTRSQHRLLSTVAWTQTNRDKSLTRDYALEGSMFTAGSCVQWLRDKLGLIESAAASESLARSVDSNGGVYFVPALSGLGAPHWDMNACGAFLGLTAGVTKAHLVRSVLEAIAFQAREVVEAINQDSPAPIQQLKVDGGACNNDFLMQCQADVLGIPVERPAVLDATAQGAAFGAGLKIGWNQLQIRFFRTFHHGTISLICLQFLPMRIQEGVSVDQ.

Residue threonine 16 coordinates ADP. Residues threonine 16 and threonine 17 each coordinate ATP. Threonine 16 is a sn-glycerol 3-phosphate binding site. An ADP-binding site is contributed by arginine 20. Arginine 86, glutamate 87, tyrosine 138, and aspartate 246 together coordinate sn-glycerol 3-phosphate. Positions 86, 87, 138, 246, and 247 each coordinate glycerol. ADP-binding residues include threonine 268 and glycine 316. ATP is bound by residues threonine 268, glycine 316, glutamine 320, and glycine 417. The ADP site is built by glycine 417 and asparagine 421.

Belongs to the FGGY kinase family.

The catalysed reaction is glycerol + ATP = sn-glycerol 3-phosphate + ADP + H(+). Its pathway is polyol metabolism; glycerol degradation via glycerol kinase pathway; sn-glycerol 3-phosphate from glycerol: step 1/1. Its activity is regulated as follows. Inhibited by fructose 1,6-bisphosphate (FBP). Key enzyme in the regulation of glycerol uptake and metabolism. Catalyzes the phosphorylation of glycerol to yield sn-glycerol 3-phosphate. The protein is Glycerol kinase of Synechocystis sp. (strain ATCC 27184 / PCC 6803 / Kazusa).